We begin with the raw amino-acid sequence, 473 residues long: H(+)/Cl(-) exchange transporter ClcA (473 aa).

The Cytoplasmic segment spans residues 1–32 (MKTDTSTFLAQQIVRLRRRDQIRRLMQRDKTP). The chain crosses the membrane as a helical span at residues 33–69 (LAILFMAAVVGTLTGLVGVAFEKAVSWVQNMRIGALV). The Periplasmic segment spans residues 70 to 76 (QVADHAF). The chain crosses the membrane as a helical span at residues 77-100 (LLWPLAFILSALLAMVGYFLVRKF). Residues 106 to 110 (GSGIP) carry the Selectivity filter part_1 motif. Ser-107 serves as a coordination point for chloride. Residues 109–116 (IPEIEGAL) constitute an intramembrane region (helical). At 117–123 (EELRPVR) the chain is on the cytoplasmic side. A run of 2 helical transmembrane segments spans residues 124-141 (WWRVLPVKFIGGMGTLGA) and 148-166 (EGPTVQIGGNLGRMVLDVF). The Selectivity filter part_2 motif lies at 146-150 (GREGP). Residues 167 to 176 (RMRSAEARHT) are Cytoplasmic-facing. Intramembrane regions (helical) lie at residues 177–189 (LLATGAAAGLSAA) and 193–201 (PLAGILFII). At 202–214 (EEMRPQFRYNLIS) the chain is on the cytoplasmic side. The helical transmembrane segment at 215-232 (IKAVFTGVIMSSIVFRIF) threads the bilayer. Residues 233–252 (NGEAPIIEVGKLSDAPVNTL) lie on the Periplasmic side of the membrane. Residues 253-281 (WLYLILGIIFGCVGPVFNSLVLRTQDMFQ) traverse the membrane as a helical segment. The Cytoplasmic segment spans residues 282–287 (RFHGGE). Residues 288 to 309 (IKKWVLMGGAIGGLCGILGLIE) traverse the membrane as a helical segment. Residues 310-329 (PEAAGGGFNLIPIAAAGNFS) lie on the Periplasmic side of the membrane. The next 2 membrane-spanning stretches (helical) occupy residues 330–349 (VGLLLFIFITRVVTTLLCFS) and 355–376 (GIFAPMLALGTLLGTAFGMAAA). Positions 355–359 (GIFAP) match the Selectivity filter part_3 motif. Residues Ile-356 and Phe-357 each contribute to the chloride site. At 377–386 (VLFPQYHLEA) the chain is on the periplasmic side. The segment at residues 387-401 (GTFAIAGMGALMAAS) is an intramembrane region (helical). The note=Loop between two helices intramembrane region spans 402-404 (VRA). The helical intramembrane region spans 405–416 (PLTGIVLVLEMT). The segment at residues 417 to 421 (DNYQL) is an intramembrane region (note=Loop between two helices). Residues 422 to 438 (ILPMIITCLGATLLAQF) form a helical membrane-spanning segment. Over 439–473 (LGGKPLYSTILARTLAKQDAEQAAKNQNASAGENT) the chain is Cytoplasmic. Tyr-445 is a binding site for chloride.

The protein belongs to the chloride channel (TC 2.A.49) family. ClcA subfamily. As to quaternary structure, homodimer.

It localises to the cell inner membrane. The catalysed reaction is 2 chloride(in) + H(+)(out) = 2 chloride(out) + H(+)(in). Functionally, proton-coupled chloride transporter. Functions as antiport system and exchanges two chloride ions for 1 proton. Probably acts as an electrical shunt for an outwardly-directed proton pump that is linked to amino acid decarboxylation, as part of the extreme acid resistance (XAR) response. The polypeptide is H(+)/Cl(-) exchange transporter ClcA (Salmonella choleraesuis (strain SC-B67)).